The chain runs to 365 residues: Anhydro-N-acetylmuramic acid kinase (365 aa).

12–19 contacts ATP; it reads GTSLDGID.

The protein belongs to the anhydro-N-acetylmuramic acid kinase family.

It carries out the reaction 1,6-anhydro-N-acetyl-beta-muramate + ATP + H2O = N-acetyl-D-muramate 6-phosphate + ADP + H(+). It participates in amino-sugar metabolism; 1,6-anhydro-N-acetylmuramate degradation. The protein operates within cell wall biogenesis; peptidoglycan recycling. Functionally, catalyzes the specific phosphorylation of 1,6-anhydro-N-acetylmuramic acid (anhMurNAc) with the simultaneous cleavage of the 1,6-anhydro ring, generating MurNAc-6-P. Is required for the utilization of anhMurNAc either imported from the medium or derived from its own cell wall murein, and thus plays a role in cell wall recycling. The chain is Anhydro-N-acetylmuramic acid kinase from Rhizorhabdus wittichii (strain DSM 6014 / CCUG 31198 / JCM 15750 / NBRC 105917 / EY 4224 / RW1) (Sphingomonas wittichii).